The chain runs to 286 residues: Phosphate import ATP-binding protein PstB (286 aa).

An ABC transporter domain is found at 40–281 (IAVRNLDFYY…PREQRTQEYI (242 aa)). 72-79 (GPSGCGKS) lines the ATP pocket.

The protein belongs to the ABC transporter superfamily. Phosphate importer (TC 3.A.1.7) family. In terms of assembly, the complex is composed of two ATP-binding proteins (PstB), two transmembrane proteins (PstC and PstA) and a solute-binding protein (PstS).

Its subcellular location is the cell inner membrane. It carries out the reaction phosphate(out) + ATP + H2O = ADP + 2 phosphate(in) + H(+). Its function is as follows. Part of the ABC transporter complex PstSACB involved in phosphate import. Responsible for energy coupling to the transport system. The chain is Phosphate import ATP-binding protein PstB from Granulibacter bethesdensis (strain ATCC BAA-1260 / CGDNIH1).